The chain runs to 213 residues: MLIIILLLIASYLLGAIPFGLWIGKIFFKKNLHDYGSGNTGTTNTFRILGVKAGIAVFIFDLLKGTLATLLPLIFHINGVSPLIFGLLAVIGHTLSIFDHFKGGKAVATSAGVVLGFSPFFLLYLLVIFILVLWLFSMISLSSVVAAIFALLGILIFPSFGFILTSYDLLFSIIIFALAIIIIFRHKTNLKRIKNHCESLVPFGLNLSGQKEK.

Helical transmembrane passes span I3 to I23, I48 to A68, L71 to I91, P119 to I139, V144 to L164, and T165 to R185.

The protein belongs to the PlsY family. In terms of assembly, probably interacts with PlsX.

The protein resides in the cell membrane. It catalyses the reaction an acyl phosphate + sn-glycerol 3-phosphate = a 1-acyl-sn-glycero-3-phosphate + phosphate. The protein operates within lipid metabolism; phospholipid metabolism. Catalyzes the transfer of an acyl group from acyl-phosphate (acyl-PO(4)) to glycerol-3-phosphate (G3P) to form lysophosphatidic acid (LPA). This enzyme utilizes acyl-phosphate as fatty acyl donor, but not acyl-CoA or acyl-ACP. This chain is Glycerol-3-phosphate acyltransferase, found in Lactococcus lactis subsp. cremoris (strain SK11).